We begin with the raw amino-acid sequence, 973 residues long: GATOR2 complex protein WDR59 (973 aa).

WD repeat units follow at residues 57 to 98 (QSKW…GEVC), 103 to 143 (GHTR…KPTV), 146 to 185 (SAVA…TAVE), 189 to 229 (AHLS…KYLN), 232 to 276 (PCQV…TPVH), and 280 to 324 (GHDD…QRLC). The disordered stretch occupies residues 346 to 365 (DKALQPQDSEPQHSSGHGDE). The segment covering 351 to 360 (PQDSEPQHSS) has biased composition (polar residues). In terms of domain architecture, RWD spans 393-494 (QEFSLINVQI…RQLVSWLESV (102 aa)). Residues 900-920 (YCSHCRSEARGTQCAICKGFT) form a C4-type zinc finger. Zn(2+) contacts are provided by C901, C904, C913, C916, C926, C937, H942, H945, H948, C959, C963, C965, and C967. The RING-type; atypical zinc-finger motif lies at 921 to 970 (FQCAICHVAVRGSSNFCLTCGHGGHTSHMMEWFRTQEVCPTGCGCHCLLE).

This sequence belongs to the WD repeat WDR59 family. Component of the GATOR2 subcomplex, composed of MIOS, SEC13, SEH1L, WDR24 and WDR59. The GATOR2 complex interacts with CASTOR1 and CASTOR2; the interaction is negatively regulated by arginine. The GATOR2 complex interacts with SESN1, SESN2 and SESN3; the interaction is negatively regulated by amino acids. Interacts with DDB1-CUL4A/B E3 ligase complexes.

It is found in the lysosome membrane. With respect to regulation, the GATOR2 complex is negatively regulated by the upstream amino acid sensors CASTOR1 and SESN2, which sequester the GATOR2 complex in absence of amino acids. In the presence of abundant amino acids, GATOR2 is released from CASTOR1 and SESN2 and activated. Functionally, as a component of the GATOR2 complex, functions as an activator of the amino acid-sensing branch of the mTORC1 signaling pathway. The GATOR2 complex indirectly activates mTORC1 through the inhibition of the GATOR1 subcomplex. GATOR2 probably acts as an E3 ubiquitin-protein ligase toward GATOR1. In the presence of abundant amino acids, the GATOR2 complex mediates ubiquitination of the NPRL2 core component of the GATOR1 complex, leading to GATOR1 inactivation. In the absence of amino acids, GATOR2 is inhibited, activating the GATOR1 complex. In Gallus gallus (Chicken), this protein is GATOR2 complex protein WDR59.